A 985-amino-acid polypeptide reads, in one-letter code: Cation channel sperm-associated auxiliary subunit epsilon (985 aa).

The N-terminal stretch at 1–35 (MPSAGQRKPGSLLALQALQKWLLRGGVGAMLARQV) is a signal peptide. The Extracellular segment spans residues 36 to 937 (VAALLLWLSC…ESLGMIPRSS (902 aa)). 4 disulfides stabilise this stretch: Cys87–Cys101, Cys130–Cys235, Cys275–Cys365, and Cys439–Cys442. Asn91, Asn143, and Asn292 each carry an N-linked (GlcNAc...) asparagine glycan. 3 N-linked (GlcNAc...) asparagine glycosylation sites follow: Asn502, Asn517, and Asn565. Disulfide bonds link Cys617/Cys724, Cys737/Cys919, Cys753/Cys786, and Cys838/Cys869. Residue Asn749 is glycosylated (N-linked (GlcNAc...) asparagine). A glycan (N-linked (GlcNAc...) asparagine) is linked at Asn830. N-linked (GlcNAc...) asparagine glycosylation is found at Asn888, Asn915, and Asn920. The helical transmembrane segment at 938–958 (VYLVAALIFVLMLTFISILVL) threads the bilayer. Topologically, residues 959-985 (SYFWYLKIYRQFIIEPLHKRPAKQKKN) are cytoplasmic.

This sequence belongs to the CATSPERD family. In terms of assembly, component of the CatSper complex or CatSpermasome composed of the core pore-forming members CATSPER1, CATSPER2, CATSPER3 and CATSPER4 as well as auxiliary members CATSPERB, CATSPERG2, CATSPERD, CATSPERE, CATSPERZ, C2CD6/CATSPERT, SLCO6C1, TMEM249, TMEM262 and EFCAB9. HSPA1 may be an additional auxiliary complex member. The core complex members CATSPER1, CATSPER2, CATSPER3 and CATSPER4 form a heterotetrameric channel. The auxiliary CATSPERB, CATSPERG2, CATSPERD and CATSPERE subunits form a pavilion-like structure over the pore which stabilizes the complex through interactions with CATSPER4, CATSPER3, CATSPER1 and CATSPER2 respectively. SLCO6C1 interacts with CATSPERE and TMEM262/CATSPERH interacts with CATSPERB, further stabilizing the complex. C2CD6/CATSPERT interacts at least with CATSPERD and is required for targeting the CatSper complex in the flagellar membrane. Testis-specific.

The protein localises to the cell projection. Its subcellular location is the cilium. The protein resides in the flagellum membrane. Its function is as follows. Auxiliary component of the CatSper complex, a complex involved in sperm cell hyperactivation. Sperm cell hyperactivation is needed for sperm motility which is essential late in the preparation of sperm for fertilization. The sequence is that of Cation channel sperm-associated auxiliary subunit epsilon from Mus musculus (Mouse).